Here is a 177-residue protein sequence, read N- to C-terminus: Large ribosomal subunit protein uL6 (177 aa).

Residues 157–177 form a disordered region; it reads YKGKGVRYAGEKVRRKEGKKK.

Belongs to the universal ribosomal protein uL6 family. As to quaternary structure, part of the 50S ribosomal subunit.

Its function is as follows. This protein binds to the 23S rRNA, and is important in its secondary structure. It is located near the subunit interface in the base of the L7/L12 stalk, and near the tRNA binding site of the peptidyltransferase center. This Caulobacter vibrioides (strain ATCC 19089 / CIP 103742 / CB 15) (Caulobacter crescentus) protein is Large ribosomal subunit protein uL6.